The sequence spans 212 residues: Uracil phosphoribosyltransferase (212 aa).

5-phospho-alpha-D-ribose 1-diphosphate is bound by residues arginine 78, arginine 103, and 130–138 (DPMLATGGS). Residues isoleucine 193 and 198–200 (GDA) each bind uracil. Aspartate 199 is a binding site for 5-phospho-alpha-D-ribose 1-diphosphate.

Belongs to the UPRTase family. Requires Mg(2+) as cofactor.

The enzyme catalyses UMP + diphosphate = 5-phospho-alpha-D-ribose 1-diphosphate + uracil. The protein operates within pyrimidine metabolism; UMP biosynthesis via salvage pathway; UMP from uracil: step 1/1. With respect to regulation, allosterically activated by GTP. Functionally, catalyzes the conversion of uracil and 5-phospho-alpha-D-ribose 1-diphosphate (PRPP) to UMP and diphosphate. This Pseudomonas paraeruginosa (strain DSM 24068 / PA7) (Pseudomonas aeruginosa (strain PA7)) protein is Uracil phosphoribosyltransferase.